Consider the following 557-residue polypeptide: DNA 3'-5' helicase XPB (557 aa).

Residues 1-135 form a required for protein stability or solubility region; that stretch reads MTDGPLIVQS…APLLGTRIAP (135 aa). The 155-residue stretch at 190 to 344 folds into the Helicase ATP-binding domain; that stretch reads VDNFWNGGSG…DVFSLIGPKR (155 aa). 203–210 provides a ligand contact to ATP; that stretch reads LPCGAGKT. The DEAH box signature appears at 298-301; it reads DEVH. Residues 398–544 form the Helicase C-terminal domain; sequence RVVEKLVAQH…AYRIVDADDI (147 aa).

It belongs to the helicase family. RAD25/XPB subfamily. In terms of assembly, monomer. The cofactor is Mn(2+). It depends on Mg(2+) as a cofactor. Ca(2+) is required as a cofactor.

The catalysed reaction is Couples ATP hydrolysis with the unwinding of duplex DNA by translocating in the 3'-5' direction.. It catalyses the reaction ATP + H2O = ADP + phosphate + H(+). ATP-dependent 3'-5' DNA helicase, unwinds 3'-overhangs, 3'- flaps, and splayed-arm DNA substrates but not 5'-overhangs or 5'-flap substrates. Requires ATP hydrolysis for activity; the ATPase activity is DNA-dependent and requires a minimum of 4 single-stranded nucleotides (nt) with 6-10 nt providing all necessary interactions for full processive unwinding. The ATPase prefers ATP over CTP or GTP, is almost inactive with TTP. The polypeptide is DNA 3'-5' helicase XPB (Kineococcus radiotolerans (strain ATCC BAA-149 / DSM 14245 / SRS30216)).